Reading from the N-terminus, the 375-residue chain is Actin (375 aa).

This sequence belongs to the actin family.

It localises to the cytoplasm. Its subcellular location is the cytoskeleton. The enzyme catalyses ATP + H2O = ADP + phosphate + H(+). Actins are highly conserved proteins that are involved in various types of cell motility and are ubiquitously expressed in all eukaryotic cells. This is Actin from Giardia intestinalis (Giardia lamblia).